The sequence spans 450 residues: Bifunctional protein GlmU (450 aa).

The pyrophosphorylase stretch occupies residues 1–228 (MKTALVILAA…ESETLGINSR (228 aa)). Residues 8–11 (LAAG), Lys22, Gln75, and 80–81 (GT) each bind UDP-N-acetyl-alpha-D-glucosamine. Asp105 contributes to the Mg(2+) binding site. UDP-N-acetyl-alpha-D-glucosamine is bound by residues Gly140, Glu154, Asn169, and Asn226. Asn226 contacts Mg(2+). The interval 229-249 (TELSAAEAAFQERARTNAFEN) is linker. Residues 250 to 450 (GVTLPAPGTV…AKKAKQQRGS (201 aa)) are N-acetyltransferase. Residues Arg315 and Lys333 each coordinate UDP-N-acetyl-alpha-D-glucosamine. His345 functions as the Proton acceptor in the catalytic mechanism. UDP-N-acetyl-alpha-D-glucosamine-binding residues include Tyr348 and Asn359. Acetyl-CoA contacts are provided by residues Ala362, 368–369 (NY), Ser387, Ser405, and Arg422.

In the N-terminal section; belongs to the N-acetylglucosamine-1-phosphate uridyltransferase family. The protein in the C-terminal section; belongs to the transferase hexapeptide repeat family. As to quaternary structure, homotrimer. It depends on Mg(2+) as a cofactor.

It is found in the cytoplasm. It catalyses the reaction alpha-D-glucosamine 1-phosphate + acetyl-CoA = N-acetyl-alpha-D-glucosamine 1-phosphate + CoA + H(+). It carries out the reaction N-acetyl-alpha-D-glucosamine 1-phosphate + UTP + H(+) = UDP-N-acetyl-alpha-D-glucosamine + diphosphate. Its pathway is nucleotide-sugar biosynthesis; UDP-N-acetyl-alpha-D-glucosamine biosynthesis; N-acetyl-alpha-D-glucosamine 1-phosphate from alpha-D-glucosamine 6-phosphate (route II): step 2/2. It functions in the pathway nucleotide-sugar biosynthesis; UDP-N-acetyl-alpha-D-glucosamine biosynthesis; UDP-N-acetyl-alpha-D-glucosamine from N-acetyl-alpha-D-glucosamine 1-phosphate: step 1/1. The protein operates within bacterial outer membrane biogenesis; LPS lipid A biosynthesis. Functionally, catalyzes the last two sequential reactions in the de novo biosynthetic pathway for UDP-N-acetylglucosamine (UDP-GlcNAc). The C-terminal domain catalyzes the transfer of acetyl group from acetyl coenzyme A to glucosamine-1-phosphate (GlcN-1-P) to produce N-acetylglucosamine-1-phosphate (GlcNAc-1-P), which is converted into UDP-GlcNAc by the transfer of uridine 5-monophosphate (from uridine 5-triphosphate), a reaction catalyzed by the N-terminal domain. This Roseobacter denitrificans (strain ATCC 33942 / OCh 114) (Erythrobacter sp. (strain OCh 114)) protein is Bifunctional protein GlmU.